The following is a 262-amino-acid chain: Snake venom serine proteinase 1 (262 aa).

A signal peptide spans Met-1 to Ala-18. The propeptide occupies Gln-19–Leu-24. In terms of domain architecture, Peptidase S1 spans Val-25–Ala-253. Cystine bridges form between Cys-31/Cys-165, Cys-52/Cys-68, Cys-144/Cys-214, Cys-176/Cys-193, and Cys-204/Cys-229. The Charge relay system role is filled by His-67. The N-linked (GlcNAc...) asparagine glycan is linked to Asn-105. Catalysis depends on Asp-112, which acts as the Charge relay system. Residue Ser-208 is the Charge relay system of the active site.

It belongs to the peptidase S1 family. Snake venom subfamily. As to quaternary structure, monomer. In terms of tissue distribution, expressed by the venom gland.

It localises to the secreted. Snake venom serine protease that may act in the hemostasis system of the prey. The protein is Snake venom serine proteinase 1 of Crotalus adamanteus (Eastern diamondback rattlesnake).